We begin with the raw amino-acid sequence, 803 residues long: Rho guanine nucleotide exchange factor 7 (803 aa).

Position 1 is an N-acetylmethionine (M1). In terms of domain architecture, Calponin-homology (CH) spans M1 to A133. N2 is subject to N-acetylthreonine. Residues S153 and S176 each carry the phosphoserine modification. The SH3 domain occupies N184–A243. Residues S249 and S257 each carry the phosphoserine modification. A DH domain is found at Y271 to V451. One can recognise a PH domain in the interval D473 to K578. Residues S518, C560, and V579 each carry the phosphoserine modification. A disordered region spans residues T580–L655. A compositionally biased stretch (polar residues) spans P593–S606. K645 and S664 each carry phosphoserine. The span at K678–E690 shows a compositional bias: basic residues. Disordered regions lie at residues K678–T704 and D748–D773. The span at R691 to S700 shows a compositional bias: basic and acidic residues. At S694 the chain carries Phosphoserine; by CaMK1. The segment covering S752 to L765 has biased composition (low complexity).

Interacts with PAK kinases through the SH3 domain. Interacts with GIT1 and TGFB1I1. Interacts with PTK2/FAK1 and RAC1. Interacts with ITCH and PARVB. Interacts with unphosphorylated PAK1. Interacts with SCRIB; interaction is direct and may play a role in regulation of apoptosis. Interacts with FRMPD4 (via N-terminus). Interacts with CaMK1. Interacts with BIN2. Interacts with YWHAZ. Interacts (via PH domain) with NOX1 (via FAD-binding FR-type domain). As to quaternary structure, interacts with SNX27. In terms of processing, phosphorylated by PTK2/FAK1; this promotes interaction with RAC1. Phosphorylated on Ser-694 by CaMK1; enhancement of GEF activity and downstream activation of RAC1.

It localises to the cell junction. It is found in the focal adhesion. Its subcellular location is the cell projection. The protein resides in the ruffle. The protein localises to the cytoplasm. It localises to the cell cortex. It is found in the lamellipodium. Acts as a RAC1 guanine nucleotide exchange factor (GEF) and can induce membrane ruffling. Functions in cell migration, attachment and cell spreading. Promotes targeting of RAC1 to focal adhesions. May function as a positive regulator of apoptosis. Downstream of NMDA receptors and CaMKK-CaMK1 signaling cascade, promotes the formation of spines and synapses in hippocampal neurons. This is Rho guanine nucleotide exchange factor 7 (ARHGEF7) from Homo sapiens (Human).